The sequence spans 212 residues: Orotate phosphoribosyltransferase (212 aa).

5-phospho-alpha-D-ribose 1-diphosphate is bound by residues Arg97, Lys101, His103, and 123–131 (EDLISTGGS). Ser127 serves as a coordination point for orotate.

This sequence belongs to the purine/pyrimidine phosphoribosyltransferase family. PyrE subfamily. Homodimer. Requires Mg(2+) as cofactor.

It carries out the reaction orotidine 5'-phosphate + diphosphate = orotate + 5-phospho-alpha-D-ribose 1-diphosphate. Its pathway is pyrimidine metabolism; UMP biosynthesis via de novo pathway; UMP from orotate: step 1/2. In terms of biological role, catalyzes the transfer of a ribosyl phosphate group from 5-phosphoribose 1-diphosphate to orotate, leading to the formation of orotidine monophosphate (OMP). The protein is Orotate phosphoribosyltransferase of Phocaeicola vulgatus (strain ATCC 8482 / DSM 1447 / JCM 5826 / CCUG 4940 / NBRC 14291 / NCTC 11154) (Bacteroides vulgatus).